We begin with the raw amino-acid sequence, 116 residues long: Large ribosomal subunit protein uL22 (116 aa).

Belongs to the universal ribosomal protein uL22 family. Part of the 50S ribosomal subunit.

This protein binds specifically to 23S rRNA; its binding is stimulated by other ribosomal proteins, e.g. L4, L17, and L20. It is important during the early stages of 50S assembly. It makes multiple contacts with different domains of the 23S rRNA in the assembled 50S subunit and ribosome. Its function is as follows. The globular domain of the protein is located near the polypeptide exit tunnel on the outside of the subunit, while an extended beta-hairpin is found that lines the wall of the exit tunnel in the center of the 70S ribosome. In Gloeobacter violaceus (strain ATCC 29082 / PCC 7421), this protein is Large ribosomal subunit protein uL22.